Here is a 328-residue protein sequence, read N- to C-terminus: MSEKIRVLLYYKYVSIENAQEYAAKHLEFCKSIGLKGRILIADEGINGTVSGDYETTQKYMDWVHSDERFADLWFKIDEENQQAFRKMFVRYKKEIVHLGLEDNNFDSDINPLETTGEYLNPKQFKEALLDEDTVVLDTRNDYEYDLGHFRGAIRPDIRNFRELPQWVRDNKDKFMEKRVVVYCTGGVRCEKFSGWLVREGFKDVGQLHGGIATYGKDPEVQGELWDGAMYVFDDRISVPINHVNPTVISKDYFDGTPCERYVNCANPFCNKQIFASEENETKYVRGCSPECRAHERNRYVQENGLSRQEWAERLEAIGESLPEFVGA.

In terms of domain architecture, Rhodanese spans 130 to 224 (LDEDTVVLDT…YGKDPEVQGE (95 aa)). Cys-184 serves as the catalytic Cysteine persulfide intermediate.

Belongs to the TrhO family.

The enzyme catalyses uridine(34) in tRNA + AH2 + O2 = 5-hydroxyuridine(34) in tRNA + A + H2O. Catalyzes oxygen-dependent 5-hydroxyuridine (ho5U) modification at position 34 in tRNAs. This is tRNA uridine(34) hydroxylase from Streptococcus pyogenes serotype M12 (strain MGAS2096).